The sequence spans 284 residues: MNAWNTIYDQFNPIAFSLGSIEVHWYGLAYACAIVTAFYMALRMIQKDPKRFPIERKEFESYFLWAELGIVLGARVGYILIYEPNSSYYLTHFWQIFNPFDSNGDFVGIRGMSYHGGLVGFLIASYLYSRKDLKKLLIYLDLIAISLPLGYVFGRIGNFLNQELVGRVVPKDSHLGQIIGIMVGNELRYPSQLIEAFLEGVIVFLMVLWAKKHTKTHGLLIVVYGLGYSLMRFIAEFYREPDSQMGVYFLNLSMGQILSLLMVIVSLGILLYATKNSKKIKGNQ.

The next 7 helical transmembrane spans lie at 14 to 34 (IAFSLGSIEVHWYGLAYACAI), 62 to 82 (YFLWAELGIVLGARVGYILIY), 106 to 126 (FVGIRGMSYHGGLVGFLIASY), 136 to 156 (LLIYLDLIAISLPLGYVFGRI), 190 to 210 (PSQLIEAFLEGVIVFLMVLWA), 218 to 238 (GLLIVVYGLGYSLMRFIAEFY), and 252 to 272 (LSMGQILSLLMVIVSLGILLY). R155 provides a ligand contact to a 1,2-diacyl-sn-glycero-3-phospho-(1'-sn-glycerol).

Belongs to the Lgt family.

It localises to the cell inner membrane. It catalyses the reaction L-cysteinyl-[prolipoprotein] + a 1,2-diacyl-sn-glycero-3-phospho-(1'-sn-glycerol) = an S-1,2-diacyl-sn-glyceryl-L-cysteinyl-[prolipoprotein] + sn-glycerol 1-phosphate + H(+). The protein operates within protein modification; lipoprotein biosynthesis (diacylglyceryl transfer). Its function is as follows. Catalyzes the transfer of the diacylglyceryl group from phosphatidylglycerol to the sulfhydryl group of the N-terminal cysteine of a prolipoprotein, the first step in the formation of mature lipoproteins. This Helicobacter pylori (strain Shi470) protein is Phosphatidylglycerol--prolipoprotein diacylglyceryl transferase.